Consider the following 211-residue polypeptide: Ion-translocating oxidoreductase complex subunit G (211 aa).

Residues 9 to 29 (GLTLAIFACATTGLVAMTQYL) traverse the membrane as a helical segment. Thr175 is subject to FMN phosphoryl threonine.

This sequence belongs to the RnfG family. In terms of assembly, the complex is composed of six subunits: RnfA, RnfB, RnfC, RnfD, RnfE and RnfG. The cofactor is FMN.

It localises to the cell inner membrane. Functionally, part of a membrane-bound complex that couples electron transfer with translocation of ions across the membrane. This Vibrio vulnificus (strain YJ016) protein is Ion-translocating oxidoreductase complex subunit G.